A 306-amino-acid chain; its full sequence is Curved DNA-binding protein (306 aa).

Positions 5–69 (DYYAIMGVKP…QRRAEYDQMW (65 aa)) constitute a J domain.

It localises to the cytoplasm. It is found in the nucleoid. Its function is as follows. DNA-binding protein that preferentially recognizes a curved DNA sequence. It is probably a functional analog of DnaJ; displays overlapping activities with DnaJ, but functions under different conditions, probably acting as a molecular chaperone in an adaptive response to environmental stresses other than heat shock. Lacks autonomous chaperone activity; binds native substrates and targets them for recognition by DnaK. Its activity is inhibited by the binding of CbpM. The chain is Curved DNA-binding protein from Escherichia coli O127:H6 (strain E2348/69 / EPEC).